A 3075-amino-acid chain; its full sequence is Lovastatin nonaketide synthase mokA (3075 aa).

Positions 49 to 488 constitute a Ketosynthase family 3 (KS3) domain; the sequence is NEPIVVVGSG…GTNAHAIIEE (440 aa). Residues C222, H361, and H408 each act as for beta-ketoacyl synthase activity in the active site. Residues 603-945 form an acyl and malonyl transferase region; the sequence is VFTGQGAQWP…AYLWEQFGIP (343 aa). The active-site For malonyltransferase activity is S697. The segment at 997 to 1133 is N-terminal hotdog fold; sequence HLLLGKLSEY…GQLVVTLDEG (137 aa). Residues 997–1311 form the PKS/mFAS DH domain; it reads HLLLGKLSEY…FKPFSPPTAS (315 aa). Catalysis depends on H1029, which acts as the Proton acceptor; for dehydratase activity. Positions 1029-1041 are dehydratase-like; it reads HALQGQVVFPAAG. The interval 1156–1311 is C-terminal hotdog fold; sequence MNRVNINSFY…FKPFSPPTAS (156 aa). D1218 (proton donor; for dehydratase activity) is an active-site residue. The interval 1556 to 1594 is methyltransferase; the sequence is YDLIIASNVLHATPDLEKTMAHARSLLKPGGQMVILEIT. Residues 2176–2470 form a beta-ketoacyl reductase region; the sequence is ALPARIRPID…FKIPERRGKA (295 aa). The Carrier domain occupies 2492–2571; that stretch reads DQVRQIVIDG…DLADDAAARL (80 aa). S2531 is subject to O-(pantetheine 4'-phosphoryl)serine. The interval 2582–2624 is disordered; the sequence is SEGGAETSDNDTSGPEGTDLSASTTITEPSSADEEDEKQEDDN. Polar residues predominate over residues 2591-2611; sequence NDTSGPEGTDLSASTTITEPS. A compositionally biased stretch (acidic residues) spans 2612–2624; it reads SADEEDEKQEDDN. Positions 2633 to 2989 are peptide synthetase elongation; that stretch reads PLSLGQEYAW…AETAEPAPLF (357 aa).

Pantetheine 4'-phosphate serves as cofactor.

It catalyses the reaction holo-[lovastatin nonaketide synthase] + 9 malonyl-CoA + S-adenosyl-L-methionine + 11 NADPH + 19 H(+) = dihydromonacolin L-[lovastatin nonaketide synthase] + S-adenosyl-L-homocysteine + 9 CO2 + 11 NADP(+) + 9 CoA + 6 H2O. It participates in polyketide biosynthesis; lovastatin biosynthesis. Nonaketide synthase; part of the gene cluster that mediates the biosynthesis of monakolin K, also known as lovastatin, and which acts as a potent competitive inhibitor of HMG-CoA reductase. Monakolin K biosynthesis is performed in two stages. The first stage is catalyzed by the nonaketide synthase mokA, which belongs to type I polyketide synthases and catalyzes the iterative nine-step formation of the polyketide. This PKS stage is completed by the action of dehydrogenase mokE, which catalyzes the NADPH-dependent reduction of the unsaturated tetra-, penta- and heptaketide intermediates that arise during the mokA-mediated biosynthesis of the nonaketide chain and leads to dihydromonacolin L. Covalently bound dihydromonacolin L is released from mokA by the mokD esterase. Conversion of dihydromonacolin L into monacolin L and then monacolin J is subsequently performed with the participation of molecular oxygen and P450 monoogygenase mokC. Finally, mokF performs the conversion of monacoline J to monacoline K through the addition of the side-chain diketide moiety (2R)-2-methylbutanoate produced by the diketide synthase mokB. This is Lovastatin nonaketide synthase mokA from Monascus pilosus (Red mold).